A 331-amino-acid chain; its full sequence is Ribosomal RNA small subunit methyltransferase H (331 aa).

S-adenosyl-L-methionine contacts are provided by residues 38 to 40 (GGY), D56, F83, D100, and Q107. The interval 287–331 (DEAELAENPRARSARLRVGVRTDAPAGKVDPQALGTPLIPKKGRR) is disordered.

This sequence belongs to the methyltransferase superfamily. RsmH family.

Its subcellular location is the cytoplasm. The catalysed reaction is cytidine(1402) in 16S rRNA + S-adenosyl-L-methionine = N(4)-methylcytidine(1402) in 16S rRNA + S-adenosyl-L-homocysteine + H(+). In terms of biological role, specifically methylates the N4 position of cytidine in position 1402 (C1402) of 16S rRNA. This chain is Ribosomal RNA small subunit methyltransferase H, found in Cereibacter sphaeroides (strain KD131 / KCTC 12085) (Rhodobacter sphaeroides).